A 22-amino-acid polypeptide reads, in one-letter code: Conantokin-Oc (22 aa).

Residues 1 to 22 form a disordered region; it reads GEEERKAMAELEAKKAQEALKA. A 4-carboxyglutamate mark is found at E3, E4, E10, and E18.

In terms of tissue distribution, expressed by the venom duct.

Its subcellular location is the secreted. Its function is as follows. Conantokins inhibit N-methyl-D-aspartate (NMDA) receptors. This is Conantokin-Oc from Conus ochroleucus (Perfect cone).